Reading from the N-terminus, the 383-residue chain is Forkhead box protein I3-B (383 aa).

Over residues 1–12 (MTSYESQGQSPT) the composition is skewed to polar residues. 3 disordered regions span residues 1-55 (MTSY…YELG), 215-277 (DNGN…PCLS), and 317-348 (TTGF…SPSH). The segment covering 25 to 35 (PPELSLYSDSY) has biased composition (low complexity). Positions 130–224 (RPPYSYSALI…DNGNFRRKRK (95 aa)) form a DNA-binding region, fork-head. The Nuclear localization signal motif lies at 220 to 226 (RRKRKRK). The segment covering 234-249 (SSSGGNESGDSNGRGS) has biased composition (low complexity). Over residues 250–277 (PKSQSIDISTSPEKGPSPASTGPSPCLS) the composition is skewed to polar residues. Residues 317–330 (TTGFSTFTPSTTVS) are compositionally biased toward low complexity.

In terms of tissue distribution, expressed in ionocyte precursors.

It localises to the nucleus. In terms of biological role, transcription factor required for epithelial cell differentiation. Involved in specification of skin ionocytes from epidermal precursors. The polypeptide is Forkhead box protein I3-B (Danio rerio (Zebrafish)).